A 236-amino-acid chain; its full sequence is Endonuclease NucS (236 aa).

It belongs to the NucS endonuclease family.

It localises to the cytoplasm. In terms of biological role, cleaves both 3' and 5' ssDNA extremities of branched DNA structures. The chain is Endonuclease NucS from Saccharolobus solfataricus (strain ATCC 35092 / DSM 1617 / JCM 11322 / P2) (Sulfolobus solfataricus).